The primary structure comprises 547 residues: Chaperonin GroEL (547 aa).

Residues 30–33 (TLGP), K51, 87–91 (DGTTT), G415, 479–481 (NAA), and D495 each bind ATP. The segment at 525 to 547 (PKEDSPGAGAGMGGMGGMGGMDM) is disordered. The span at 532 to 547 (AGAGMGGMGGMGGMDM) shows a compositional bias: gly residues.

It belongs to the chaperonin (HSP60) family. Forms a cylinder of 14 subunits composed of two heptameric rings stacked back-to-back. Interacts with the co-chaperonin GroES.

The protein resides in the cytoplasm. The catalysed reaction is ATP + H2O + a folded polypeptide = ADP + phosphate + an unfolded polypeptide.. In terms of biological role, together with its co-chaperonin GroES, plays an essential role in assisting protein folding. The GroEL-GroES system forms a nano-cage that allows encapsulation of the non-native substrate proteins and provides a physical environment optimized to promote and accelerate protein folding. The chain is Chaperonin GroEL from Nitrosomonas eutropha (strain DSM 101675 / C91 / Nm57).